A 613-amino-acid polypeptide reads, in one-letter code: Pesticidal crystal-like protein Cry16Aa (613 aa).

The protein belongs to the delta endotoxin family.

Its subcellular location is the secreted. Its function is as follows. Toxin active on mosquito larvae of the species Aedes aegypti, Culex pipiens and Anopheles stephensi. In Paraclostridium bifermentans (Clostridium bifermentans), this protein is Pesticidal crystal-like protein Cry16Aa (cry16Aa).